A 321-amino-acid polypeptide reads, in one-letter code: tRNA U34 carboxymethyltransferase (321 aa).

Residues K90, W104, K109, G129, 151-153 (DPT), 180-181 (IE), M195, Y199, and R314 each bind carboxy-S-adenosyl-L-methionine.

The protein belongs to the class I-like SAM-binding methyltransferase superfamily. CmoB family. As to quaternary structure, homotetramer.

The catalysed reaction is carboxy-S-adenosyl-L-methionine + 5-hydroxyuridine(34) in tRNA = 5-carboxymethoxyuridine(34) in tRNA + S-adenosyl-L-homocysteine + H(+). Functionally, catalyzes carboxymethyl transfer from carboxy-S-adenosyl-L-methionine (Cx-SAM) to 5-hydroxyuridine (ho5U) to form 5-carboxymethoxyuridine (cmo5U) at position 34 in tRNAs. The sequence is that of tRNA U34 carboxymethyltransferase from Haemophilus influenzae (strain ATCC 51907 / DSM 11121 / KW20 / Rd).